A 100-amino-acid polypeptide reads, in one-letter code: Urease subunit gamma (100 aa).

This sequence belongs to the urease gamma subunit family. In terms of assembly, heterotrimer of UreA (gamma), UreB (beta) and UreC (alpha) subunits. Three heterotrimers associate to form the active enzyme.

The protein resides in the cytoplasm. The enzyme catalyses urea + 2 H2O + H(+) = hydrogencarbonate + 2 NH4(+). Its pathway is nitrogen metabolism; urea degradation; CO(2) and NH(3) from urea (urease route): step 1/1. This is Urease subunit gamma from Acinetobacter baumannii (strain SDF).